Here is a 615-residue protein sequence, read N- to C-terminus: Peptidoglycan-binding protein YepA (615 aa).

Residues 1–26 form the signal peptide; the sequence is MRNLAALLPALFLLGSSLLPAGTALA.

The protein belongs to the bacterial solute-binding protein 5 family. In terms of assembly, the complex is composed of one ATP-binding protein (YejF), two transmembrane proteins (YejB and YejE) and a solute-binding protein (YepA).

The protein localises to the periplasm. In terms of biological role, part of the ABC transporter complex YejBEF-YepA involved in the uptake of muropeptides, the breakdown products of cell wall peptidoglycan. The import of muropeptides into the cell enables peptidoglycan recycling, which is vital for cell wall integrity in this bacterium. Probably binds muropeptides. This chain is Peptidoglycan-binding protein YepA, found in Agrobacterium fabrum (strain C58 / ATCC 33970) (Agrobacterium tumefaciens (strain C58)).